A 322-amino-acid polypeptide reads, in one-letter code: Acetyl-coenzyme A carboxylase carboxyl transferase subunit beta (322 aa).

Residues 24-293 enclose the CoA carboxyltransferase N-terminal domain; the sequence is LWIKCPDTGQ…PAVEEPAVVD (270 aa).

The protein belongs to the AccD/PCCB family. As to quaternary structure, acetyl-CoA carboxylase is a heterohexamer composed of biotin carboxyl carrier protein (AccB), biotin carboxylase (AccC) and two subunits each of ACCase subunit alpha (AccA) and ACCase subunit beta (AccD).

The protein localises to the cytoplasm. It catalyses the reaction N(6)-carboxybiotinyl-L-lysyl-[protein] + acetyl-CoA = N(6)-biotinyl-L-lysyl-[protein] + malonyl-CoA. It participates in lipid metabolism; malonyl-CoA biosynthesis; malonyl-CoA from acetyl-CoA: step 1/1. Component of the acetyl coenzyme A carboxylase (ACC) complex. Biotin carboxylase (BC) catalyzes the carboxylation of biotin on its carrier protein (BCCP) and then the CO(2) group is transferred by the transcarboxylase to acetyl-CoA to form malonyl-CoA. The chain is Acetyl-coenzyme A carboxylase carboxyl transferase subunit beta from Rhodopseudomonas palustris (strain HaA2).